Reading from the N-terminus, the 258-residue chain is NH(3)-dependent NAD(+) synthetase (258 aa).

ATP is bound at residue 34–41 (GLSGGIDS). A Mg(2+)-binding site is contributed by Asp40. A deamido-NAD(+)-binding site is contributed by Arg116. Residue Thr136 participates in ATP binding. Mg(2+) is bound at residue Glu141. Residues Lys165 and Ser187 each coordinate ATP.

It belongs to the NAD synthetase family. As to quaternary structure, homodimer.

It carries out the reaction deamido-NAD(+) + NH4(+) + ATP = AMP + diphosphate + NAD(+) + H(+). It functions in the pathway cofactor biosynthesis; NAD(+) biosynthesis; NAD(+) from deamido-NAD(+) (ammonia route): step 1/1. Functionally, catalyzes the ATP-dependent amidation of deamido-NAD to form NAD. Uses ammonia as a nitrogen source. In Fusobacterium nucleatum subsp. nucleatum (strain ATCC 25586 / DSM 15643 / BCRC 10681 / CIP 101130 / JCM 8532 / KCTC 2640 / LMG 13131 / VPI 4355), this protein is NH(3)-dependent NAD(+) synthetase.